A 504-amino-acid chain; its full sequence is MSFSVDVLANIAIELQRGIGHQDRFQRLITTLRQVLECDASALLRYDSRQFIPLAIDGLAKDVLGRRFALEGHPRLEAIARAGDVVRFPADSELPDPYDGLIPGQESLKVHACVGLPLFAGQNLIGALTLDGMQPDQFDVFSDEELRLIAALAAGALSNALLIEQLESQNMLPGDAAPFEAVKQTQMIGLSPGMTQLKKEIEIVAASDLNVLISGETGTGKELVAKAIHEASPRAVNPLVYLNCAALPESVAESELFGHVKGAFTGAISNRSGKFEMADNGTLFLDEIGELSLALQAKLLRVLQYGDIQRVGDDRSLRVDVRVLAATNRDLREEVLAGRFRADLFHRLSVFPLSVPPLRERGDDVILLAGYFCEQCRLRLGLSRVVLSAGARNLLQHYNFPGNVRELEHAIHRAVVLARATRSGDEVILEAQHFAFPDVTLPPPEAAAVPVVKQNLREATEAFQRETIRQALAQNHHNWAACARMLETDVANLHRLAKRLGLKD.

Position 57 is a 4-aspartylphosphate (aspartate 57). One can recognise a Sigma-54 factor interaction domain in the interval 187-416 (MIGLSPGMTQ…LEHAIHRAVV (230 aa)). ATP is bound by residues 215–222 (GETGTGKE) and 278–287 (ADNGTLFLDE). Residues 479-498 (WAACARMLETDVANLHRLAK) constitute a DNA-binding region (H-T-H motif).

It participates in nitrogen metabolism; nitric oxide reduction. Its function is as follows. Required for the expression of anaerobic nitric oxide (NO) reductase, acts as a transcriptional activator for at least the norVW operon. Activation also requires sigma-54. The sequence is that of Anaerobic nitric oxide reductase transcription regulator NorR from Escherichia coli O17:K52:H18 (strain UMN026 / ExPEC).